Here is a 514-residue protein sequence, read N- to C-terminus: Membrane-bound lytic murein transglycosylase F (514 aa).

The N-terminal stretch at 1 to 30 (MKKLKINYLFIGILTLLLAAALWPSIPWFG) is a signal peptide. The non-LT domain stretch occupies residues 31-269 (KTENHIAAIQ…RIEEKYLGHG (239 aa)). The tract at residues 270 to 514 (DDFDYVDTRS…LFTPQKKEEK (245 aa)) is LT domain. Glu-314 is a catalytic residue.

In the N-terminal section; belongs to the bacterial solute-binding protein 3 family. It in the C-terminal section; belongs to the transglycosylase Slt family.

It is found in the cell outer membrane. It catalyses the reaction Exolytic cleavage of the (1-&gt;4)-beta-glycosidic linkage between N-acetylmuramic acid (MurNAc) and N-acetylglucosamine (GlcNAc) residues in peptidoglycan, from either the reducing or the non-reducing ends of the peptidoglycan chains, with concomitant formation of a 1,6-anhydrobond in the MurNAc residue.. Murein-degrading enzyme that degrades murein glycan strands and insoluble, high-molecular weight murein sacculi, with the concomitant formation of a 1,6-anhydromuramoyl product. Lytic transglycosylases (LTs) play an integral role in the metabolism of the peptidoglycan (PG) sacculus. Their lytic action creates space within the PG sacculus to allow for its expansion as well as for the insertion of various structures such as secretion systems and flagella. In Salmonella choleraesuis (strain SC-B67), this protein is Membrane-bound lytic murein transglycosylase F.